Reading from the N-terminus, the 189-residue chain is Interferon alpha-21 (189 aa).

The first 23 residues, 1–23 (MALSFSLLMAVLVLSYKSICSLG), serve as a signal peptide directing secretion. 2 disulfide bridges follow: C24-C122 and C52-C162.

It belongs to the alpha/beta interferon family.

The protein resides in the secreted. In terms of biological role, produced by macrophages, IFN-alpha have antiviral activities. Interferon stimulates the production of two enzymes: a protein kinase and an oligoadenylate synthetase. This chain is Interferon alpha-21 (IFNA21), found in Homo sapiens (Human).